Consider the following 186-residue polypeptide: Enhancer of split m7 protein (186 aa).

In terms of domain architecture, bHLH spans 13–68 (YRKVMKPLLERKRRARINKCLDELKDLMAECVAQTGDAKFEKADILEVTVQHLRKL). The Orange domain maps to 83–116 (FRAGYIRAANEVSRALASLPRVDVAFGTTLMTHL). A WRPW motif motif is present at residues 183–186 (WRPW).

As to quaternary structure, transcription repression requires formation of a complex with a corepressor protein (Groucho). Forms homodimers.

It localises to the nucleus. Functionally, participates in the control of cell fate choice by uncommitted neuroectodermal cells in the embryo. Transcriptional repressor. Binds DNA on N-box motifs: 5'-CACNAG-3'. This is Enhancer of split m7 protein from Drosophila melanogaster (Fruit fly).